The primary structure comprises 295 residues: Ribosomal RNA small subunit methyltransferase A (295 aa).

S-adenosyl-L-methionine is bound by residues asparagine 29, leucine 31, glycine 56, glutamate 77, aspartate 102, and asparagine 128.

This sequence belongs to the class I-like SAM-binding methyltransferase superfamily. rRNA adenine N(6)-methyltransferase family. RsmA subfamily.

It is found in the cytoplasm. It carries out the reaction adenosine(1518)/adenosine(1519) in 16S rRNA + 4 S-adenosyl-L-methionine = N(6)-dimethyladenosine(1518)/N(6)-dimethyladenosine(1519) in 16S rRNA + 4 S-adenosyl-L-homocysteine + 4 H(+). In terms of biological role, specifically dimethylates two adjacent adenosines (A1518 and A1519) in the loop of a conserved hairpin near the 3'-end of 16S rRNA in the 30S particle. May play a critical role in biogenesis of 30S subunits. This chain is Ribosomal RNA small subunit methyltransferase A, found in Listeria innocua serovar 6a (strain ATCC BAA-680 / CLIP 11262).